A 706-amino-acid polypeptide reads, in one-letter code: Cyclic nucleotide-gated channel alpha-3 (706 aa).

The Cytoplasmic portion of the chain corresponds to methionine 1–histidine 189. The interval arginine 113–serine 177 is disordered. Basic and acidic residues predominate over residues serine 147 to serine 177. Residues tryptophan 190 to phenylalanine 211 form a helical membrane-spanning segment. At aspartate 212 to glutamate 217 the chain is on the extracellular side. A helical membrane pass occupies residues histidine 218–leucine 238. Residues valine 239–threonine 265 are Cytoplasmic-facing. A helical membrane pass occupies residues leucine 266–leucine 285. Residues glycine 286–tyrosine 289 lie on the Extracellular side of the membrane. The chain crosses the membrane as a helical span at residues proline 290–phenylalanine 307. Residues aspartate 308–proline 317 are Cytoplasmic-facing. Residues proline 317 to methionine 425 are ion conduction pathway. The helical transmembrane segment at asparagine 318–tyrosine 340 threads the bilayer. Residues phenylalanine 341–arginine 366 lie on the Extracellular side of the membrane. Residue asparagine 358 is glycosylated (N-linked (GalNAc...) asparagine). 2 helical membrane passes run leucine 367 to tyrosine 397 and leucine 398 to isoleucine 422. The interval threonine 384 to glutamate 387 is selectivity filter. Residues serine 423–proline 706 lie on the Cytoplasmic side of the membrane. A C-linker region spans residues alanine 427–aspartate 504. The cyclic nucleotide-binding domain stretch occupies residues alanine 507 to lysine 627. Glycine 567, glutamate 568, serine 570, arginine 583, threonine 584, and aspartate 628 together coordinate 3',5'-cyclic GMP. Residues isoleucine 645–valine 688 are a coiled coil. A disordered region spans residues glutamate 685–proline 706.

Belongs to the cyclic nucleotide-gated cation channel (TC 1.A.1.5) family. CNGA3 subfamily. In terms of assembly, forms heterotetrameric channels composed of CNGA3 and CNGB3 subunits with 3:1 stoichiometry. In terms of tissue distribution, testis, kidney, retinal cone (at protein level) and heart.

The protein resides in the cell membrane. It catalyses the reaction Ca(2+)(in) = Ca(2+)(out). The enzyme catalyses Na(+)(in) = Na(+)(out). It carries out the reaction K(+)(in) = K(+)(out). The catalysed reaction is NH4(+)(in) = NH4(+)(out). It catalyses the reaction Rb(+)(in) = Rb(+)(out). The enzyme catalyses Li(+)(in) = Li(+)(out). It carries out the reaction Cs(+)(in) = Cs(+)(out). Ca(2+) influx is inhibited by extracellular Mg(2+) ions. In terms of biological role, pore-forming subunit of the cone cyclic nucleotide-gated channel. Mediates cone photoresponses at bright light converting transient changes in intracellular cGMP levels into electrical signals. In the dark, cGMP levels are high and keep the channel open enabling a steady inward current carried by Na(+) and Ca(2+) ions that leads to membrane depolarization and neurotransmitter release from synaptic terminals. Upon photon absorption cGMP levels decline leading to channel closure and membrane hyperpolarization that ultimately slows neurotransmitter release and signals the presence of light, the end point of the phototransduction cascade. Pore-forming subunit of the gustatory cyclic nucleotide-gated channel. In the taste buds, may sense oral extracellular pH and conduct ion currents that modulate the excitability of taste cells. Conducts cGMP- and cAMP-gated ion currents, with permeability for monovalent and divalent cations. The protein is Cyclic nucleotide-gated channel alpha-3 of Bos taurus (Bovine).